A 427-amino-acid chain; its full sequence is 3-phosphoshikimate 1-carboxyvinyltransferase (427 aa).

3-phosphoshikimate is bound by residues Lys-22, Ser-23, and Arg-27. Lys-22 contributes to the phosphoenolpyruvate binding site. Phosphoenolpyruvate is bound by residues Gly-96 and Arg-124. 3-phosphoshikimate contacts are provided by Ser-169, Ser-170, Gln-171, Ser-197, Asp-313, Asn-336, and Lys-340. Residue Gln-171 participates in phosphoenolpyruvate binding. Residue Asp-313 is the Proton acceptor of the active site. Positions 344, 386, and 411 each coordinate phosphoenolpyruvate.

Belongs to the EPSP synthase family. Monomer.

It is found in the cytoplasm. The catalysed reaction is 3-phosphoshikimate + phosphoenolpyruvate = 5-O-(1-carboxyvinyl)-3-phosphoshikimate + phosphate. It functions in the pathway metabolic intermediate biosynthesis; chorismate biosynthesis; chorismate from D-erythrose 4-phosphate and phosphoenolpyruvate: step 6/7. Its function is as follows. Catalyzes the transfer of the enolpyruvyl moiety of phosphoenolpyruvate (PEP) to the 5-hydroxyl of shikimate-3-phosphate (S3P) to produce enolpyruvyl shikimate-3-phosphate and inorganic phosphate. The protein is 3-phosphoshikimate 1-carboxyvinyltransferase of Shigella sonnei.